We begin with the raw amino-acid sequence, 323 residues long: Pectate lyase A (323 aa).

The first 31 residues, 1–31 (MTNFKWIVAAAGLLFGQVLAAPTATSTHAKR), serve as a signal peptide directing secretion. Residue Asn95 is glycosylated (N-linked (GlcNAc...) asparagine). Positions 136, 165, and 169 each coordinate Ca(2+). Residue Arg222 is part of the active site.

This sequence belongs to the polysaccharide lyase 1 family. Ca(2+) serves as cofactor.

It localises to the secreted. The enzyme catalyses Eliminative cleavage of (1-&gt;4)-alpha-D-galacturonan to give oligosaccharides with 4-deoxy-alpha-D-galact-4-enuronosyl groups at their non-reducing ends.. Its function is as follows. Pectinolytic enzyme consist of four classes of enzymes: pectin lyase, polygalacturonase, pectin methylesterase and rhamnogalacturonase. Among pectinolytic enzymes, pectin lyase is the most important in depolymerization of pectin, since it cleaves internal glycosidic bonds of highly methylated pectins. Favors pectate, the anion, over pectin, the methyl ester. The polypeptide is Pectate lyase A (plyA) (Aspergillus niger).